The primary structure comprises 115 residues: Aspartate 1-decarboxylase (115 aa).

Catalysis depends on Ser-25, which acts as the Schiff-base intermediate with substrate; via pyruvic acid. Pyruvic acid (Ser) is present on Ser-25. Position 57 (Thr-57) interacts with substrate. Tyr-58 acts as the Proton donor in catalysis. 71 to 73 (GAA) is a binding site for substrate.

The protein belongs to the PanD family. As to quaternary structure, heterooctamer of four alpha and four beta subunits. The cofactor is pyruvate. In terms of processing, is synthesized initially as an inactive proenzyme, which is activated by self-cleavage at a specific serine bond to produce a beta-subunit with a hydroxyl group at its C-terminus and an alpha-subunit with a pyruvoyl group at its N-terminus.

The protein localises to the cytoplasm. The enzyme catalyses L-aspartate + H(+) = beta-alanine + CO2. It participates in cofactor biosynthesis; (R)-pantothenate biosynthesis; beta-alanine from L-aspartate: step 1/1. Functionally, catalyzes the pyruvoyl-dependent decarboxylation of aspartate to produce beta-alanine. The chain is Aspartate 1-decarboxylase from Campylobacter curvus (strain 525.92).